Here is a 654-residue protein sequence, read N- to C-terminus: MLGFRSPIRLCKLSALGSTRLLPISRPKLFSTAVARYAADMETVNTTKRLARLRQLMQEHKIDVYIVPSEDSHQSEYIAPCDGRREFISGFSGSAGTAIVSMTKAALSTDGRYFNQASKQLDSNWELLKRGVENVPTWQEWTTEQAQGGKVVGVDPALITASGARSLEETLKRNGSSLVGISQNLVDLVWGKDRPAPPREKVRVHPDKFSGKTFQEKIADLRKELEKKKTAGFVISMLDEIAWLFNLRGSDIPYNPVFFAYAIITPTKAELYIDDDKITPEVVAHLGQDVVIKPYNSIFADAKALSEARRKEAGETASKFLLSNKASWALSLSLGGEEHVEETRSPIADAKAIKNEVELAGMRACHIRDGAALIEYFAWLENELVNKKTVLDEVDAADKLEQIRTKHDLFAGLSFDTISSTGPNGAVIHYKPEKGTCSIIDPDAIYLCDSGAQYLDGTTDVTRTFHFGKPTELEKKAFTLVLKGLIAIDTAVFPKGTSGFALDALARQYLWKEGLDYLHGTGHGVGSYLNVHEGPIGIGTRVQYTEVPIAPGNVISDEPGFYEDGKFGIRIENVIMAREVQTTHKFGDKPWLGFEHVTMAPIGRNLIEPSLLSDLELKWVNDYHAEVWDKTHHFFENDEFTRSWLQRETAPITK.

Mn(2+) contacts are provided by aspartate 449, aspartate 460, glutamate 558, and glutamate 572.

Belongs to the peptidase M24B family. Mn(2+) is required as a cofactor.

It catalyses the reaction Release of any N-terminal amino acid, including proline, that is linked to proline, even from a dipeptide or tripeptide.. Catalyzes the removal of a penultimate prolyl residue from the N-termini of peptides. The polypeptide is Probable Xaa-Pro aminopeptidase P (ampp) (Aspergillus fumigatus (strain CBS 144.89 / FGSC A1163 / CEA10) (Neosartorya fumigata)).